Consider the following 477-residue polypeptide: Endogenous retrovirus group V member 1 Env polyprotein (477 aa).

An N-terminal signal peptide occupies residues methionine 1 to alanine 21. The Extracellular segment spans residues glutamine 22 to alanine 321. Asparagine 68 carries an N-linked (GlcNAc...) asparagine glycan. A helical transmembrane segment spans residues leucine 322–phenylalanine 342. Residues threonine 343–leucine 477 are Cytoplasmic-facing.

The protein belongs to the gamma type-C retroviral envelope protein family. In terms of tissue distribution, expressed in placenta.

The protein resides in the membrane. The chain is Endogenous retrovirus group V member 1 Env polyprotein (ERVV-1) from Homo sapiens (Human).